The primary structure comprises 96 residues: Integration host factor subunit beta (96 aa).

Residues 59–78 (RVGRNPKTGETVSLPGKYVP) are disordered.

The protein belongs to the bacterial histone-like protein family. Heterodimer of an alpha and a beta chain.

Its function is as follows. This protein is one of the two subunits of integration host factor, a specific DNA-binding protein that functions in genetic recombination as well as in transcriptional and translational control. The sequence is that of Integration host factor subunit beta from Thioalkalivibrio sulfidiphilus (strain HL-EbGR7).